Here is a 593-residue protein sequence, read N- to C-terminus: Glucose-6-phosphate 1-dehydrogenase, chloroplastic (593 aa).

Residues 116 to 123 (GASGDLAK) and Arg-150 contribute to the NADP(+) site. Cys-168 and Cys-176 form a disulfide bridge. Lys-253 is an NADP(+) binding site. Residues Lys-253, 283-287 (HYLGK), Glu-321, and Asp-340 contribute to the D-glucose 6-phosphate site. The Proton acceptor role is filled by His-345. Lys-438 is a binding site for NADP(+). D-glucose 6-phosphate contacts are provided by Lys-441 and Arg-446. 2 residues coordinate NADP(+): Arg-451 and Arg-480. Residue Gln-482 participates in D-glucose 6-phosphate binding. NADP(+)-binding positions include 488-490 (YLK) and Arg-573.

The protein belongs to the glucose-6-phosphate dehydrogenase family. As to quaternary structure, homodimer.

The protein localises to the plastid. Its subcellular location is the chloroplast. The catalysed reaction is D-glucose 6-phosphate + NADP(+) = 6-phospho-D-glucono-1,5-lactone + NADPH + H(+). It participates in carbohydrate degradation; pentose phosphate pathway; D-ribulose 5-phosphate from D-glucose 6-phosphate (oxidative stage): step 1/3. Its activity is regulated as follows. Regulated by metabolites. Post-translationally inactivated by cysteine-mediated redox modification via the ferredoxin-thioredoxin system in the light and this avoids futile cycles with photosynthetic CO2 fixation. In terms of biological role, catalyzes the rate-limiting step of the oxidative pentose-phosphate pathway, which represents a route for the dissimilation of carbohydrates besides glycolysis. The main function of this enzyme is to provide reducing power (NADPH) and pentose phosphates for fatty acid and nucleic acid synthesis which are involved in membrane synthesis and cell division. The protein is Glucose-6-phosphate 1-dehydrogenase, chloroplastic of Nicotiana tabacum (Common tobacco).